Reading from the N-terminus, the 136-residue chain is MGDKTKVQVSKLKPGRYILIDGEPCRIGNITVSSPGKHGSAKARIEAVGIFDGKVRSIVKPTSAEVDVPIIDKRTAQIIAMTPDTVQIMDMETYELYDVPIETGVADEIKGQLKEGINVEYWETLGRIKIMKIKGE.

A Hypusine modification is found at lysine 37.

The protein belongs to the eIF-5A family.

The protein localises to the cytoplasm. Its function is as follows. Functions by promoting the formation of the first peptide bond. This chain is Translation initiation factor 5A (eIF5A), found in Thermococcus onnurineus (strain NA1).